The chain runs to 270 residues: Putative pyruvate, phosphate dikinase regulatory protein (270 aa).

Residue 151–158 (GVSRTSKT) coordinates ADP.

The protein belongs to the pyruvate, phosphate/water dikinase regulatory protein family. PDRP subfamily.

It catalyses the reaction N(tele)-phospho-L-histidyl/L-threonyl-[pyruvate, phosphate dikinase] + ADP = N(tele)-phospho-L-histidyl/O-phospho-L-threonyl-[pyruvate, phosphate dikinase] + AMP + H(+). It carries out the reaction N(tele)-phospho-L-histidyl/O-phospho-L-threonyl-[pyruvate, phosphate dikinase] + phosphate + H(+) = N(tele)-phospho-L-histidyl/L-threonyl-[pyruvate, phosphate dikinase] + diphosphate. In terms of biological role, bifunctional serine/threonine kinase and phosphorylase involved in the regulation of the pyruvate, phosphate dikinase (PPDK) by catalyzing its phosphorylation/dephosphorylation. The protein is Putative pyruvate, phosphate dikinase regulatory protein (yqfL) of Bacillus subtilis (strain 168).